The chain runs to 125 residues: Large ribosomal subunit protein bL17 (125 aa).

Belongs to the bacterial ribosomal protein bL17 family. As to quaternary structure, part of the 50S ribosomal subunit. Contacts protein L32.

The chain is Large ribosomal subunit protein bL17 from Marinomonas sp. (strain MWYL1).